Here is a 254-residue protein sequence, read N- to C-terminus: Ubiquinone biosynthesis O-methyltransferase (254 aa).

Positions 47, 78, 99, and 141 each coordinate S-adenosyl-L-methionine.

The protein belongs to the methyltransferase superfamily. UbiG/COQ3 family.

It catalyses the reaction a 3-demethylubiquinol + S-adenosyl-L-methionine = a ubiquinol + S-adenosyl-L-homocysteine + H(+). The catalysed reaction is a 3-(all-trans-polyprenyl)benzene-1,2-diol + S-adenosyl-L-methionine = a 2-methoxy-6-(all-trans-polyprenyl)phenol + S-adenosyl-L-homocysteine + H(+). The protein operates within cofactor biosynthesis; ubiquinone biosynthesis. O-methyltransferase that catalyzes the 2 O-methylation steps in the ubiquinone biosynthetic pathway. This Rhodopseudomonas palustris (strain BisB18) protein is Ubiquinone biosynthesis O-methyltransferase.